The chain runs to 312 residues: Light-independent protochlorophyllide reductase iron-sulfur ATP-binding protein (312 aa).

ATP contacts are provided by residues 55–60 and Lys-84; that span reads GIGKST. Mg(2+) is bound at residue Ser-59. [4Fe-4S] cluster-binding residues include Cys-140 and Cys-174. ATP contacts are provided by residues 225–226 and 249–251; these read NR and PDL.

This sequence belongs to the NifH/BchL/ChlL family. As to quaternary structure, homodimer. Protochlorophyllide reductase is composed of three subunits; BchL, BchN and BchB. Requires [4Fe-4S] cluster as cofactor.

The enzyme catalyses chlorophyllide a + oxidized 2[4Fe-4S]-[ferredoxin] + 2 ADP + 2 phosphate = protochlorophyllide a + reduced 2[4Fe-4S]-[ferredoxin] + 2 ATP + 2 H2O. Its pathway is porphyrin-containing compound metabolism; bacteriochlorophyll biosynthesis (light-independent). Its function is as follows. Component of the dark-operative protochlorophyllide reductase (DPOR) that uses Mg-ATP and reduced ferredoxin to reduce ring D of protochlorophyllide (Pchlide) to form chlorophyllide a (Chlide). This reaction is light-independent. The L component serves as a unique electron donor to the NB-component of the complex, and binds Mg-ATP. The sequence is that of Light-independent protochlorophyllide reductase iron-sulfur ATP-binding protein from Rhodopseudomonas palustris (strain BisB18).